The sequence spans 381 residues: Tryptophan--tRNA ligase (381 aa).

The 'HIGH' region signature appears at 82–90 (PSLGMHIGH). Residues 254–258 (KMSSS) carry the 'KMSKS' region motif.

This sequence belongs to the class-I aminoacyl-tRNA synthetase family.

It localises to the cytoplasm. The enzyme catalyses tRNA(Trp) + L-tryptophan + ATP = L-tryptophyl-tRNA(Trp) + AMP + diphosphate + H(+). This Sulfolobus acidocaldarius (strain ATCC 33909 / DSM 639 / JCM 8929 / NBRC 15157 / NCIMB 11770) protein is Tryptophan--tRNA ligase.